The chain runs to 362 residues: N-acylethanolamine-hydrolyzing acid amidase (362 aa).

The first 33 residues, 1–33 (MGTPAIRAACHGAHLALALLLLLSLSDPWLWAT), serve as a signal peptide directing secretion. Asn42 and Asn112 each carry an N-linked (GlcNAc...) asparagine glycan. The active-site Nucleophile is the Cys131. Residues Asn314 and Asn338 are each glycosylated (N-linked (GlcNAc...) asparagine).

This sequence belongs to the acid ceramidase family. Heterodimer of an alpha and a beta subunit, produced by autocatalytic cleavage. N-glycosylated. Tunicamycin treatment causes a reduction in specific activity against N-palmitoylethanolamine. In terms of processing, autoproteolytic cleavage at pH 4.5 gives rise to the alpha and beta subunit. Cleavage gives rise to a conformation change that activates the enzyme. The same catalytic Cys residue mediates the autoproteolytic cleavage and subsequent hydrolysis of lipid substrates. In terms of tissue distribution, expressed in brain, cecum, colon, heart, ileum, kidney, liver, lung, spleen, stomach, submaxillary gland, testis and thymus.

It localises to the lysosome. The protein resides in the membrane. It carries out the reaction N-hexadecanoylethanolamine + H2O = ethanolamine + hexadecanoate. The catalysed reaction is an N-(long-chain fatty acyl)ethanolamine + H2O = a long-chain fatty acid + ethanolamine. It catalyses the reaction N-dodecanoylethanolamine + H2O = dodecanoate + ethanolamine. The enzyme catalyses N-tetradecanoylethanolamine + H2O = tetradecanoate + ethanolamine. It carries out the reaction an N-acylsphing-4-enine + H2O = sphing-4-enine + a fatty acid. The catalysed reaction is N-hexadecanoylsphing-4-enine + H2O = sphing-4-enine + hexadecanoate. It catalyses the reaction N-dodecanoylsphing-4-enine + H2O = dodecanoate + sphing-4-enine. It participates in lipid metabolism; fatty acid metabolism. Stimulated by DTT. Stimulated by nonionic detergent of the polyoxyethylenep-t-octylphenylether type (Triton X-100 or Nonidet P-40) whereas 3-[(3-cholamidopropyl)dimethylammonio]propane-1-sulfonate (CHAPS) and octyl alpha-D-glucopyranoside decrease the N-(long-chain-acyl)ethanolamine deacylase activity. Polysorbate 20 (Tween 20) is inhibitory. Stimulated by endogenous phospholipids such as choline- or ethanolamine-containing phospholipids, and dihydrolipoic acid. Its function is as follows. Degrades bioactive fatty acid amides to their corresponding acids, with the following preference: N-palmitoylethanolamine &gt; N-myristoylethanolamine &gt; N-stearoylethanolamine &gt; N-oleoylethanolamine &gt; N-linoleoylethanolamine &gt; N-arachidonoylethanolamine. This is N-acylethanolamine-hydrolyzing acid amidase from Rattus norvegicus (Rat).